The chain runs to 342 residues: L-threonine 3-dehydrogenase (342 aa).

Position 38 (cysteine 38) interacts with Zn(2+). Active-site charge relay system residues include threonine 40 and histidine 43. Residues histidine 63, glutamate 64, cysteine 93, cysteine 96, cysteine 99, and cysteine 107 each contribute to the Zn(2+) site. NAD(+) is bound by residues isoleucine 175, aspartate 195, arginine 200, 262 to 264 (LGI), and 286 to 287 (IY).

The protein belongs to the zinc-containing alcohol dehydrogenase family. As to quaternary structure, homotetramer. It depends on Zn(2+) as a cofactor.

The protein localises to the cytoplasm. It catalyses the reaction L-threonine + NAD(+) = (2S)-2-amino-3-oxobutanoate + NADH + H(+). It functions in the pathway amino-acid degradation; L-threonine degradation via oxydo-reductase pathway; glycine from L-threonine: step 1/2. Its function is as follows. Catalyzes the NAD(+)-dependent oxidation of L-threonine to 2-amino-3-ketobutyrate. In Burkholderia cenocepacia (strain HI2424), this protein is L-threonine 3-dehydrogenase.